Reading from the N-terminus, the 327-residue chain is Phenylalanine--tRNA ligase alpha subunit (327 aa).

Glu-252 lines the Mg(2+) pocket.

It belongs to the class-II aminoacyl-tRNA synthetase family. Phe-tRNA synthetase alpha subunit type 1 subfamily. Tetramer of two alpha and two beta subunits. Mg(2+) serves as cofactor.

The protein localises to the cytoplasm. The enzyme catalyses tRNA(Phe) + L-phenylalanine + ATP = L-phenylalanyl-tRNA(Phe) + AMP + diphosphate + H(+). The chain is Phenylalanine--tRNA ligase alpha subunit from Shewanella oneidensis (strain ATCC 700550 / JCM 31522 / CIP 106686 / LMG 19005 / NCIMB 14063 / MR-1).